An 85-amino-acid polypeptide reads, in one-letter code: Beta-insect depressant toxin Lqh-dprIT3c (85 aa).

The N-terminal stretch at 1-21 (MKLLLLLTISASMLIEGLVNA) is a signal peptide. An LCN-type CS-alpha/beta domain is found at 22 to 82 (DGYIRGGDGC…EWDYETNTCG (61 aa)). Cystine bridges form between cysteine 31–cysteine 81, cysteine 35–cysteine 56, cysteine 42–cysteine 63, and cysteine 46–cysteine 65. Glycine 82 is modified (glycine amide).

The protein belongs to the long (4 C-C) scorpion toxin superfamily. Sodium channel inhibitor family. Beta subfamily. As to expression, expressed by the venom gland.

It localises to the secreted. Depressant insect beta-toxins cause a transient contraction paralysis followed by a slow flaccid paralysis. They bind voltage-independently at site-4 of sodium channels (Nav) and block action potentials, primarily by depolarizing the axonal membrane and suppressing the sodium current. This depressant toxin is active only on insects. It is found in a relatively small amount in the venom, and its activity on insects is 10-fold higher compared to other known depressant toxins. The sequence is that of Beta-insect depressant toxin Lqh-dprIT3c from Leiurus hebraeus (Hebrew deathstalker scorpion).